A 424-amino-acid chain; its full sequence is MTNKKAFKEACKFIAGGVNSPVRAFANVQSEPKFISHGKGAYIFDIDGNSYIDYVQSWGPLLFGHCDKDIQKACQKALHKGSSFGAPTLLETELAKLVLSDFPHLEKIRFVSSGTEATMSAIRLARGFTKKDKILKFEGCYHGHSDSLLVSAGSGAATFNSPSSLGVLEDVAKHTLVAKYNDINSVKELFEKNKDIACVIIEPIAGNMGLVPAKQDFLEELAKICKNNQTLLIFDEVMSGYRASYLGSYGINHIQADIITFGKVIGGGLPAAAFASRAEIMDILSPLGGVYQAGTLSGNPLAMAAGIASLTKAKKKTKLYDKLGKLAKKLTQGMKKLADEKGLPLQVCHVGSMFGYFFTKDPVSNYQDALKSDLALFSKFHKNMLENGIYLAPSQFETGFICSKMDDKIIDTTLEAVRESFKRI.

Lysine 263 carries the N6-(pyridoxal phosphate)lysine modification.

Belongs to the class-III pyridoxal-phosphate-dependent aminotransferase family. HemL subfamily. In terms of assembly, homodimer. Pyridoxal 5'-phosphate is required as a cofactor.

The protein resides in the cytoplasm. It catalyses the reaction (S)-4-amino-5-oxopentanoate = 5-aminolevulinate. It functions in the pathway porphyrin-containing compound metabolism; protoporphyrin-IX biosynthesis; 5-aminolevulinate from L-glutamyl-tRNA(Glu): step 2/2. In Campylobacter jejuni (strain RM1221), this protein is Glutamate-1-semialdehyde 2,1-aminomutase.